Consider the following 321-residue polypeptide: MAVYTDITEDDLKWFLTEYDVGTLLSYKGIAEGVENSNFLLHTSRDPLILTLYEKRVEKNDLPFFLGLMQHLASRGLSCPLPLPRRDGELLGHLSGRPAALISFLEGMWLRKPEAKHCREVGKALAAMHVAGEGFDIKRPNALSLAGWQGLWEKSEARADEVEPGLQDEIRGELDFLGSHWPKDLPDGVIHADLFPDNVFFLGDELSGLIDFYFACNDQLAYDVSICLNAWCFEKDGAYNITKGMALLEGYQSVRPLSDAEIAALPTLSRGSALRFFLTRLYDWLTTPAGAMVTKKDPLEYLRKLRFHRQIASSAEYGLKA.

This sequence belongs to the pseudomonas-type ThrB family.

The enzyme catalyses L-homoserine + ATP = O-phospho-L-homoserine + ADP + H(+). It participates in amino-acid biosynthesis; L-threonine biosynthesis; L-threonine from L-aspartate: step 4/5. The sequence is that of Homoserine kinase from Rhizobium rhizogenes (strain K84 / ATCC BAA-868) (Agrobacterium radiobacter).